Reading from the N-terminus, the 561-residue chain is Potassium-transporting ATPase potassium-binding subunit (561 aa).

Helical transmembrane passes span 4 to 24, 65 to 85, 133 to 153, 177 to 197, 253 to 273, 285 to 305, 380 to 400, 417 to 437, 484 to 504, and 528 to 548; these read IVMQDVFFVVLLLVLAVPLGI, AVSVLAFSAVGFVFVMAVLML, IGLTVQNFVSAATGIAVLFAV, LYILLPLSLILALLLVSQGVV, FTNLIEMLAILLIPVALVVMF, AIMTAMMIVFVIGVVAITISE, GLYGMIGFIILTVFIAGLLVG, MVCLLILVPPLLTLFGTAVAV, MVGAVMMLLARFIPLVAALYL, and FIGLLIGVVVLVGALSFLPAL.

Belongs to the KdpA family. The system is composed of three essential subunits: KdpA, KdpB and KdpC.

The protein resides in the cell membrane. In terms of biological role, part of the high-affinity ATP-driven potassium transport (or Kdp) system, which catalyzes the hydrolysis of ATP coupled with the electrogenic transport of potassium into the cytoplasm. This subunit binds the extracellular potassium ions and delivers the ions to the membrane domain of KdpB through an intramembrane tunnel. The chain is Potassium-transporting ATPase potassium-binding subunit from Listeria monocytogenes serovar 1/2a (strain ATCC BAA-679 / EGD-e).